Here is a 259-residue protein sequence, read N- to C-terminus: Ribonuclease PH (259 aa).

Phosphate-binding positions include Arg-88 and 126 to 128 (GTR).

Belongs to the RNase PH family. Homohexameric ring arranged as a trimer of dimers.

It carries out the reaction tRNA(n+1) + phosphate = tRNA(n) + a ribonucleoside 5'-diphosphate. Phosphorolytic 3'-5' exoribonuclease that plays an important role in tRNA 3'-end maturation. Removes nucleotide residues following the 3'-CCA terminus of tRNAs; can also add nucleotides to the ends of RNA molecules by using nucleoside diphosphates as substrates, but this may not be physiologically important. Probably plays a role in initiation of 16S rRNA degradation (leading to ribosome degradation) during starvation. The polypeptide is Ribonuclease PH (Mycobacterium bovis (strain BCG / Pasteur 1173P2)).